Reading from the N-terminus, the 316-residue chain is Phosphatidylinositol mannoside acyltransferase (316 aa).

Residue H137 is the Proton acceptor of the active site. Hexadecanoyl-CoA-binding residues include H137 and R175. E211 is a catalytic residue. E240 is a hexadecanoyl-CoA binding site.

This sequence belongs to the LpxL/LpxM/LpxP family.

The protein resides in the cell inner membrane. The enzyme catalyses a 2,6-O-bis(alpha-D-mannopyranosyl)-1-phosphatidyl-1D-myo-inositol + an acyl-CoA = a 2-O-(alpha-D-mannosyl)-6-O-(6-O-acyl-alpha-D-mannosyl)-1-phosphatidyl-1D-myo-inositol + CoA. It catalyses the reaction a 1,2-diacyl-sn-glycero-3-phospho-[alpha-D-mannopyranosyl-(1&lt;-&gt;6)-D-myo-inositol] + an acyl-CoA = a 1,2-diacyl-sn-glycero-3-phospho-[alpha-D-6-acyl-mannopyranosyl-(1&lt;-&gt;6)-D-myo-inositol] + CoA. It participates in phospholipid metabolism; phosphatidylinositol metabolism. Functionally, catalyzes the transfer of a palmitoyl moiety from palmitoyl-CoA to the 6-position of the mannose ring linked to the 2-position of myo-inositol in phosphatidyl-myo-inositol monomannoside (PIM1) or dimannoside (PIM2). The chain is Phosphatidylinositol mannoside acyltransferase from Mycobacterium tuberculosis (strain CDC 1551 / Oshkosh).